Reading from the N-terminus, the 656-residue chain is Pumilio homology domain family member 6 (656 aa).

The disordered stretch occupies residues 1-107 (MAPLTKKTNG…GGENGNHTEQ (107 aa)). Positions 13–23 (SAKEVSHSEKK) are enriched in basic and acidic residues. 3 positions are modified to phosphoserine; by CK2: serine 31, serine 34, and serine 35. Phosphoserine occurs at positions 34 and 35. The segment covering 52 to 89 (SDDDDLDDLSTSDSEAEEEADELDISDDSEEHENENEE) has biased composition (acidic residues). The segment covering 90–107 (KEGKDKSEGGENGNHTEQ) has biased composition (basic and acidic residues). Positions 133–483 (RLRVKTPPLP…ELLSKFAPMF (351 aa)) constitute a PUM-HD domain. Pumilio repeat units follow at residues 155–191 (ELSK…QIVD), 192–227 (ALKG…TIIN), 228–264 (ELHG…QMIK), 340–376 (ELLH…LILK), 377–413 (ALKN…KTFS), and 415–450 (TVKE…PIVK).

This sequence belongs to the PUF6 family. As to quaternary structure, component of the ASH1 mRNP composed of at least PUF6, SHE2, SHE3, SHE1 and the ASH1 mRNA. Interacts with SHE2 and FUN12. Phosphorylation by CK2 relieves translational repression activity.

The protein localises to the bud tip. It localises to the nucleus. The protein resides in the nucleolus. Functionally, RNA-binding protein involved in post-transcriptional regulation. Component of the ASH1 mRNP which transports the ASH1 mRNA to the distal tip of the bud, where the ASH1 protein is translated and targeted to the daughter cell nucleus. Binds to the ASH1 3'-UTR containing the PUF consensus UUGU segment and represses its translation. This silencing of ASH1 mRNA is critical for asymmetric seggregation of ASH1 to the daughter cell nucleus. The protein is Pumilio homology domain family member 6 (PUF6) of Saccharomyces cerevisiae (strain ATCC 204508 / S288c) (Baker's yeast).